The chain runs to 179 residues: Large ribosomal subunit protein uL5 (179 aa).

The protein belongs to the universal ribosomal protein uL5 family. As to quaternary structure, part of the 50S ribosomal subunit; part of the 5S rRNA/L5/L18/L25 subcomplex. Contacts the 5S rRNA and the P site tRNA. Forms a bridge to the 30S subunit in the 70S ribosome.

Its function is as follows. This is one of the proteins that bind and probably mediate the attachment of the 5S RNA into the large ribosomal subunit, where it forms part of the central protuberance. In the 70S ribosome it contacts protein S13 of the 30S subunit (bridge B1b), connecting the 2 subunits; this bridge is implicated in subunit movement. Contacts the P site tRNA; the 5S rRNA and some of its associated proteins might help stabilize positioning of ribosome-bound tRNAs. In Nitrosospira multiformis (strain ATCC 25196 / NCIMB 11849 / C 71), this protein is Large ribosomal subunit protein uL5.